Consider the following 362-residue polypeptide: Alcohol dehydrogenase 13 (362 aa).

The Zn(2+) site is built by Cys51, His73, Cys104, Cys107, Cys110, Cys118, and Cys168. His73 contacts substrate. NAD(+) contacts are provided by residues 193 to 198 (GLGGLG) and 280 to 282 (VGA).

The protein belongs to the zinc-containing alcohol dehydrogenase family. Class-III subfamily. As to quaternary structure, homodimer. It depends on Zn(2+) as a cofactor.

The protein is Alcohol dehydrogenase 13 of Catharanthus roseus (Madagascar periwinkle).